We begin with the raw amino-acid sequence, 191 residues long: Dephospho-CoA kinase (191 aa).

The DPCK domain maps to 3–191 (AIGITGSYAS…KLIKDLECRV (189 aa)). 11 to 16 (ASGKTF) is an ATP binding site.

This sequence belongs to the CoaE family.

The protein localises to the cytoplasm. The enzyme catalyses 3'-dephospho-CoA + ATP = ADP + CoA + H(+). Its pathway is cofactor biosynthesis; coenzyme A biosynthesis; CoA from (R)-pantothenate: step 5/5. In terms of biological role, catalyzes the phosphorylation of the 3'-hydroxyl group of dephosphocoenzyme A to form coenzyme A. The chain is Dephospho-CoA kinase from Rickettsia conorii (strain ATCC VR-613 / Malish 7).